The chain runs to 215 residues: Protein-L-isoaspartate O-methyltransferase (215 aa).

Residue S62 is part of the active site.

It belongs to the methyltransferase superfamily. L-isoaspartyl/D-aspartyl protein methyltransferase family.

Its subcellular location is the cytoplasm. The enzyme catalyses [protein]-L-isoaspartate + S-adenosyl-L-methionine = [protein]-L-isoaspartate alpha-methyl ester + S-adenosyl-L-homocysteine. Catalyzes the methyl esterification of L-isoaspartyl residues in peptides and proteins that result from spontaneous decomposition of normal L-aspartyl and L-asparaginyl residues. It plays a role in the repair and/or degradation of damaged proteins. In Rhodopseudomonas palustris (strain BisA53), this protein is Protein-L-isoaspartate O-methyltransferase.